Here is a 575-residue protein sequence, read N- to C-terminus: MAPPPPPTRCLPVLLLLLLVVAPLLAHGRRPFISDGGNANANANASVLRLPSAAAAAGEDMGCEMSYGFLPCTTTAWGNLFLVLAYGFLMFKSATYLSSGSEMLLQILGPGIVGGLFLPILGALPDALLILVSGLSGTKEVAQSQVLIGMGLLAGSTVMLLTLLWGSCVVVGKCDLSENSTAIDSRDTKGFSLLGSGVSTDKQTSYAARIMAISILPFIIVQIPKIFKLHSGHQITVLIGLIVAALLLLSYCLYQVFQPWIQRRRLEYTRLKHVMSGLLRHAQKHSIGRLLDDEGRPNVSVIEKLFHRIDQDNDGKLERGELQAFIVGINFEDIDWNSNLAADQVMADFDTSRNHFIEKGEFVNGMLRWLDEAKRTVTSGAYSKKFLNDFHARTRDEQTGLLDKDEEEGEADGNPTWTCIKAILLLLLGTAMAAASADPLVDAVHNFSNATHIPSFFISFIVMPLATNSSEAVSAIIFASRKKKRTLSLTFSEVYGGVTMNNTLCLAVFLALVYVRGLTWDFSSEVLIILLVCIIMGLFTSFRTDFPLWTCFVAFLLYPLSLIMVYILDYKFGWS.

Helical transmembrane passes span F69 to L89, I112 to V132, and V146 to G166. Residue N179 is glycosylated (N-linked (GlcNAc...) asparagine). The next 2 helical transmembrane spans lie at I210–H230 and V237–F257. 2 consecutive EF-hand domains span residues P297–E332 and N337–E372. Residue N298 is glycosylated (N-linked (GlcNAc...) asparagine). Residues D310, D312, D314, K316, E321, D350, S352, N354, and E361 each coordinate Ca(2+). A run of 5 helical transmembrane segments spans residues W417 to A437, F457 to I477, V494 to Y514, F522 to F542, and L548 to L568.

This sequence belongs to the Ca(2+):cation antiporter (CaCA) (TC 2.A.19) family.

The protein resides in the cell membrane. Functionally, may function as a sodium/calcium exchanger (NCX) and participate in the maintenance of calcium homeostasis. May play a role abiotic stress responses. The chain is Sodium/calcium exchanger NCL2 from Oryza sativa subsp. japonica (Rice).